Here is a 317-residue protein sequence, read N- to C-terminus: uncharacterized protein (317 aa).

This is an uncharacterized protein from Borreliella burgdorferi (strain ATCC 35210 / DSM 4680 / CIP 102532 / B31) (Borrelia burgdorferi).